Reading from the N-terminus, the 694-residue chain is Elongation factor G (694 aa).

The tr-type G domain occupies 8 to 287 (EDYRNFGIMA…AVVSYLPSPI (280 aa)). GTP is bound by residues 17–24 (AHIDAGKT), 86–90 (DTPGH), and 140–143 (NKMD).

Belongs to the TRAFAC class translation factor GTPase superfamily. Classic translation factor GTPase family. EF-G/EF-2 subfamily.

It localises to the cytoplasm. Functionally, catalyzes the GTP-dependent ribosomal translocation step during translation elongation. During this step, the ribosome changes from the pre-translocational (PRE) to the post-translocational (POST) state as the newly formed A-site-bound peptidyl-tRNA and P-site-bound deacylated tRNA move to the P and E sites, respectively. Catalyzes the coordinated movement of the two tRNA molecules, the mRNA and conformational changes in the ribosome. This chain is Elongation factor G, found in Bartonella tribocorum (strain CIP 105476 / IBS 506).